Consider the following 415-residue polypeptide: Tyrosine-protein phosphatase non-receptor type 2 (415 aa).

The Tyrosine-protein phosphatase domain maps to 5 to 275; it reads IEREFEELDT…RFSYMAIIEG (271 aa). Tyrosine 22 is modified (phosphotyrosine). Serine 52 carries the post-translational modification Phosphoserine. Tyrosine 68 carries the phosphotyrosine modification. Substrate contacts are provided by residues aspartate 182, 216 to 222, and glutamine 260; that span reads CSAGIGR. The Phosphocysteine intermediate role is filled by cysteine 216. At cysteine 216 the chain carries S-nitrosocysteine. Serine 293, serine 298, and serine 304 each carry phosphoserine. Positions 346–415 are endoplasmic reticulum location; it reads ESALRKRIRE…WTLFFQQNAL (70 aa). The segment at 376–415 is mediates interaction with STX17; it reads ERKRKRWLYWQPILTKMGFMSVILVGAFVGWTLFFQQNAL.

The protein belongs to the protein-tyrosine phosphatase family. Non-receptor class 1 subfamily. Interacts with RMDN3. Isoform 1 interacts with TMED9. Isoform 1 interacts with STX17; dephosphorylates STX17. Interacts with ITGA1 (via cytoplasmic domain); activates the phosphatase activity towards EGFR. Interacts with TRAF2; probably involved in tumor necrosis factor-mediated signaling. Interacts with MET. Interacts with FAM220A and STAT3; interaction with FAM220A promotes interaction of PTPN2 with transcriptional activator STAT3, leading to dephosphorylation of STAT3 by PTPN2 and negative regulation of STAT3 transcriptional activator activity. In terms of processing, specifically phosphorylated in a cell cycle-dependent manner by cyclin-dependent kinases CDK1 and CDK2. Probably activated through phosphorylation by PKR. In terms of tissue distribution, ubiquitously expressed. Isoform 2 is probably the major isoform. Isoform 1 is expressed in T-cells and in placenta.

The protein resides in the endoplasmic reticulum. It localises to the endoplasmic reticulum-Golgi intermediate compartment. Its subcellular location is the nucleus. It is found in the cytoplasm. The protein localises to the cell membrane. It catalyses the reaction O-phospho-L-tyrosyl-[protein] + H2O = L-tyrosyl-[protein] + phosphate. Non-receptor type tyrosine-specific phosphatase that dephosphorylates receptor protein tyrosine kinases including INSR, EGFR, CSF1R, PDGFR. Also dephosphorylates non-receptor protein tyrosine kinases like JAK1, JAK2, JAK3, Src family kinases, STAT1, STAT3 and STAT6 either in the nucleus or the cytoplasm. Negatively regulates numerous signaling pathways and biological processes like hematopoiesis, inflammatory response, cell proliferation and differentiation, and glucose homeostasis. Plays a multifaceted and important role in the development of the immune system. Functions in T-cell receptor signaling through dephosphorylation of FYN and LCK to control T-cells differentiation and activation. Dephosphorylates CSF1R, negatively regulating its downstream signaling and macrophage differentiation. Negatively regulates cytokine (IL2/interleukin-2 and interferon)-mediated signaling through dephosphorylation of the cytoplasmic kinases JAK1, JAK3 and their substrate STAT1, that propagate signaling downstream of the cytokine receptors. Also regulates the IL6/interleukin-6 and IL4/interleukin-4 cytokine signaling through dephosphorylation of STAT3 and STAT6 respectively. In addition to the immune system, it is involved in anchorage-dependent, negative regulation of EGF-stimulated cell growth. Activated by the integrin ITGA1/ITGB1, it dephosphorylates EGFR and negatively regulates EGF signaling. Dephosphorylates PDGFRB and negatively regulates platelet-derived growth factor receptor-beta signaling pathway and therefore cell proliferation. Negatively regulates tumor necrosis factor-mediated signaling downstream via MAPK through SRC dephosphorylation. May also regulate the hepatocyte growth factor receptor signaling pathway through dephosphorylation of the hepatocyte growth factor receptor MET. Also plays an important role in glucose homeostasis. For instance, negatively regulates the insulin receptor signaling pathway through the dephosphorylation of INSR and control gluconeogenesis and liver glucose production through negative regulation of the IL6 signaling pathways. May also bind DNA. In Homo sapiens (Human), this protein is Tyrosine-protein phosphatase non-receptor type 2 (PTPN2).